The chain runs to 192 residues: Phosphoheptose isomerase (192 aa).

Residues 37–192 (IAASLRDGGK…IMLIEKELAV (156 aa)) form the SIS domain. 52–54 (NGG) is a substrate binding site. Positions 61 and 65 each coordinate Zn(2+). Residues glutamate 65, 93–94 (ND), 119–121 (STS), serine 124, and glutamine 172 contribute to the substrate site. 2 residues coordinate Zn(2+): glutamine 172 and histidine 180.

It belongs to the SIS family. GmhA subfamily. In terms of assembly, homotetramer. Zn(2+) is required as a cofactor.

The protein localises to the cytoplasm. It catalyses the reaction 2 D-sedoheptulose 7-phosphate = D-glycero-alpha-D-manno-heptose 7-phosphate + D-glycero-beta-D-manno-heptose 7-phosphate. The protein operates within carbohydrate biosynthesis; D-glycero-D-manno-heptose 7-phosphate biosynthesis; D-glycero-alpha-D-manno-heptose 7-phosphate and D-glycero-beta-D-manno-heptose 7-phosphate from sedoheptulose 7-phosphate: step 1/1. Catalyzes the isomerization of sedoheptulose 7-phosphate in D-glycero-D-manno-heptose 7-phosphate. This chain is Phosphoheptose isomerase, found in Tolumonas auensis (strain DSM 9187 / NBRC 110442 / TA 4).